We begin with the raw amino-acid sequence, 167 residues long: MLVIHQRLPARSPRWDEELHLTYEARSKSRLRCFAASGEEVGLFLERGQPPLADGDCLEARDGRLVRVVARPERLLHVTCASPLELTRAAYHLGNRHVALQVGDGWLRLLDDYVLKAMLEQLGATVEAIEAPFQPEHGAYGGGHHHSHHGEAEFNYAPRLHQFGVRR.

It belongs to the UreE family.

It localises to the cytoplasm. In terms of biological role, involved in urease metallocenter assembly. Binds nickel. Probably functions as a nickel donor during metallocenter assembly. The chain is Urease accessory protein UreE from Pseudomonas aeruginosa (strain UCBPP-PA14).